The following is a 133-amino-acid chain: IgW chain C region, secreted form 2 (133 aa).

Residues 1–71 (VISGFYPDSV…TGSRFNDRIS (71 aa)) enclose the Ig-like domain. N-linked (GlcNAc...) asparagine glycans are attached at residues Asn32 and Asn112. The secretory tail stretch occupies residues 76 to 133 (KGGTVNLPVPGGNTPCTCPPSSCSGCMPKLVYQTDLNVTLENGGQLQYNCHQQACKIK).

Expressed mainly in lymphoid tissues including spleen, epigonal organ and circulating lymphocytes.

Its subcellular location is the secreted. This Heterodontus francisci (Horn shark) protein is IgW chain C region, secreted form 2.